The sequence spans 570 residues: Fibropellin-3 (570 aa).

Positions 1 to 17 (MKVSLLAVLLLSIVAAT) are cleaved as a signal peptide. The EGF-like 1 domain occupies 18–55 (YGQGECGSNPCENGSVCRDGEGTYICECQMGYDGQNCD). 4 disulfide bridges follow: C23-C34, C28-C43, C45-C54, and C62-C88. N30 carries an N-linked (GlcNAc...) asparagine glycan. In terms of domain architecture, CUB spans 62 to 175 (CGYNIFESTG…RKGFRITFSS (114 aa)). N136 is a glycosylation site (N-linked (GlcNAc...) asparagine). The 37-residue stretch at 176 to 212 (DGDDCTPNPCLNGATCVDQVNDYQCICAPGFTGDNCE) folds into the EGF-like 2; calcium-binding domain. Cystine bridges form between C180–C191, C185–C200, C202–C211, C218–C229, C223–C238, C240–C249, C256–C267, C261–C276, C278–C287, C294–C305, C299–C314, C316–C325, C332–C343, C337–C352, C354–C363, C370–C381, C375–C390, C392–C401, C408–C419, C413–C428, C430–C439, and C445–C521. The EGF-like 3; calcium-binding domain maps to 214–250 (DIDECASAPCRNGGACVDQVNGYTCNCIPGFNGVNCE). The EGF-like 4; calcium-binding domain occupies 252-288 (NINECASIPCLNGGICVDGINQFACTCLPGYTGILCE). Positions 290–326 (DINECASSPCQNGGSCTDAVNRYTCDCRAGFTGSNCE) constitute an EGF-like 5; calcium-binding domain. In terms of domain architecture, EGF-like 6; calcium-binding spans 328 to 364 (NINECASSPCLNGGSCLDGVDGYVCQCLPNYTGTHCE). The N-linked (GlcNAc...) asparagine glycan is linked to N357. The 37-residue stretch at 366-402 (SLDACASLPCQNGGVCTNVGGDYVCECLPGYTGINCE) folds into the EGF-like 7 domain. One can recognise an EGF-like 8; calcium-binding domain in the interval 404-440 (DINECASLPCQNGGECINGIAMYICQCRQGYAGVNCE). In terms of domain architecture, Avidin-like spans 443 to 562 (GFCDLEGVWF…GQDKWTRYEQ (120 aa)).

Homotetramer.

It localises to the secreted. The protein resides in the extracellular space. Forms the apical lamina, a component of the extracellular matrix. This Strongylocentrotus purpuratus (Purple sea urchin) protein is Fibropellin-3 (EGF3).